A 309-amino-acid chain; its full sequence is Probable manganese-dependent inorganic pyrophosphatase (309 aa).

Positions 9, 13, 15, 75, 97, and 149 each coordinate Mn(2+).

Belongs to the PPase class C family. Mn(2+) serves as cofactor.

Its subcellular location is the cytoplasm. The catalysed reaction is diphosphate + H2O = 2 phosphate + H(+). The sequence is that of Probable manganese-dependent inorganic pyrophosphatase from Bacillus licheniformis (strain ATCC 14580 / DSM 13 / JCM 2505 / CCUG 7422 / NBRC 12200 / NCIMB 9375 / NCTC 10341 / NRRL NRS-1264 / Gibson 46).